Reading from the N-terminus, the 329-residue chain is 4-hydroxythreonine-4-phosphate dehydrogenase (329 aa).

The substrate site is built by histidine 136 and threonine 137. A divalent metal cation contacts are provided by histidine 166, histidine 211, and histidine 266. Substrate contacts are provided by lysine 274, asparagine 283, and arginine 292.

This sequence belongs to the PdxA family. Homodimer. Requires Zn(2+) as cofactor. It depends on Mg(2+) as a cofactor. Co(2+) serves as cofactor.

It is found in the cytoplasm. It carries out the reaction 4-(phosphooxy)-L-threonine + NAD(+) = 3-amino-2-oxopropyl phosphate + CO2 + NADH. It functions in the pathway cofactor biosynthesis; pyridoxine 5'-phosphate biosynthesis; pyridoxine 5'-phosphate from D-erythrose 4-phosphate: step 4/5. Functionally, catalyzes the NAD(P)-dependent oxidation of 4-(phosphooxy)-L-threonine (HTP) into 2-amino-3-oxo-4-(phosphooxy)butyric acid which spontaneously decarboxylates to form 3-amino-2-oxopropyl phosphate (AHAP). This Shigella flexneri serotype 5b (strain 8401) protein is 4-hydroxythreonine-4-phosphate dehydrogenase.